The chain runs to 444 residues: Glutamate-1-semialdehyde 2,1-aminomutase (444 aa).

Lys-278 is modified (N6-(pyridoxal phosphate)lysine).

Belongs to the class-III pyridoxal-phosphate-dependent aminotransferase family. HemL subfamily. Homodimer. It depends on pyridoxal 5'-phosphate as a cofactor.

Its subcellular location is the cytoplasm. The enzyme catalyses (S)-4-amino-5-oxopentanoate = 5-aminolevulinate. Its pathway is porphyrin-containing compound metabolism; protoporphyrin-IX biosynthesis; 5-aminolevulinate from L-glutamyl-tRNA(Glu): step 2/2. In Deinococcus radiodurans (strain ATCC 13939 / DSM 20539 / JCM 16871 / CCUG 27074 / LMG 4051 / NBRC 15346 / NCIMB 9279 / VKM B-1422 / R1), this protein is Glutamate-1-semialdehyde 2,1-aminomutase.